A 199-amino-acid chain; its full sequence is Pyridoxal 5'-phosphate synthase subunit PdxT (199 aa).

47–49 (GES) contacts L-glutamine. Residue Cys79 is the Nucleophile of the active site. L-glutamine contacts are provided by residues Arg106 and 133–134 (IR). Catalysis depends on charge relay system residues His169 and Glu171.

Belongs to the glutaminase PdxT/SNO family. In the presence of PdxS, forms a dodecamer of heterodimers. Only shows activity in the heterodimer.

The enzyme catalyses aldehydo-D-ribose 5-phosphate + D-glyceraldehyde 3-phosphate + L-glutamine = pyridoxal 5'-phosphate + L-glutamate + phosphate + 3 H2O + H(+). It carries out the reaction L-glutamine + H2O = L-glutamate + NH4(+). Its pathway is cofactor biosynthesis; pyridoxal 5'-phosphate biosynthesis. In terms of biological role, catalyzes the hydrolysis of glutamine to glutamate and ammonia as part of the biosynthesis of pyridoxal 5'-phosphate. The resulting ammonia molecule is channeled to the active site of PdxS. In Desulfitobacterium hafniense (strain DSM 10664 / DCB-2), this protein is Pyridoxal 5'-phosphate synthase subunit PdxT.